A 217-amino-acid chain; its full sequence is Membrane-spanning 4-domains subfamily A member 6C (217 aa).

Positions 1–20 are enriched in polar residues; sequence MIPQVVTNETITTISPNGIN. The disordered stretch occupies residues 1–33; it reads MIPQVVTNETITTISPNGINFPQKDESQPTQQR. Topologically, residues 1 to 46 are cytoplasmic; sequence MIPQVVTNETITTISPNGINFPQKDESQPTQQRQDSLKKHLKAEIK. Residues 47-67 traverse the membrane as a helical segment; that stretch reads VIVAIQIMCAVTVLALGIILA. Topologically, residues 68–84 are extracellular; sequence SVPPVPYFNSVFSVLLK. Residues 85–105 form a helical membrane-spanning segment; it reads SGYPFIGALFFIASGILSIIT. Over 106 to 121 the chain is Cytoplasmic; it reads ERKSTKPLVDASLTLN. A helical transmembrane segment spans residues 122–142; it reads ILSVSFAFVGIIIISVSLAGL. At 143 to 186 the chain is on the extracellular side; it reads HPASEQCKQSKELSLIEHDYYQPFYNSDRSECAVTKSILTGALS. A helical membrane pass occupies residues 187 to 207; sequence VMLIISVLELGLALLSAMLWL. The Cytoplasmic segment spans residues 208-217; sequence REGVLTSLRM.

Belongs to the MS4A family. Expressed only by thymus, spleen, peripheral lymph node and bone marrow.

Its subcellular location is the membrane. Its function is as follows. May be involved in signal transduction as a component of a multimeric receptor complex. This chain is Membrane-spanning 4-domains subfamily A member 6C (Ms4a6c), found in Mus musculus (Mouse).